The primary structure comprises 140 residues: Large ribosomal subunit protein uL16 (140 aa).

This sequence belongs to the universal ribosomal protein uL16 family. In terms of assembly, part of the 50S ribosomal subunit.

In terms of biological role, binds 23S rRNA and is also seen to make contacts with the A and possibly P site tRNAs. This Phytoplasma australiense protein is Large ribosomal subunit protein uL16.